A 308-amino-acid chain; its full sequence is Spermidine synthase 2 (308 aa).

Positions 17-254 constitute a PABS domain; sequence PGWFSEISPL…GVIGFMLCST (238 aa). An S-adenosyl 3-(methylsulfanyl)propylamine-binding site is contributed by Gln-48. A putrescine-binding site is contributed by Tyr-78. Residues Gln-79, Asp-103, Glu-123, 154–155, and Asp-173 each bind S-adenosyl 3-(methylsulfanyl)propylamine; that span reads DG. Catalysis depends on Asp-173, which acts as the Proton acceptor. Putrescine-binding positions include 173–176 and Tyr-242; that span reads DSSD.

It belongs to the spermidine/spermine synthase family.

It catalyses the reaction S-adenosyl 3-(methylsulfanyl)propylamine + putrescine = S-methyl-5'-thioadenosine + spermidine + H(+). The protein operates within amine and polyamine biosynthesis; spermidine biosynthesis; spermidine from putrescine: step 1/1. The polypeptide is Spermidine synthase 2 (Hyoscyamus niger (Black henbane)).